Here is a 123-residue protein sequence, read N- to C-terminus: Small ribosomal subunit protein uS12 (123 aa).

The interval 1-29 (MPTINQLVRKGRVPQKAKSKVPAMEQNPQ) is disordered. Basic residues predominate over residues 9–19 (RKGRVPQKAKS). Aspartate 89 is subject to 3-methylthioaspartic acid.

This sequence belongs to the universal ribosomal protein uS12 family. Part of the 30S ribosomal subunit. Contacts proteins S8 and S17. May interact with IF1 in the 30S initiation complex.

Its function is as follows. With S4 and S5 plays an important role in translational accuracy. Functionally, interacts with and stabilizes bases of the 16S rRNA that are involved in tRNA selection in the A site and with the mRNA backbone. Located at the interface of the 30S and 50S subunits, it traverses the body of the 30S subunit contacting proteins on the other side and probably holding the rRNA structure together. The combined cluster of proteins S8, S12 and S17 appears to hold together the shoulder and platform of the 30S subunit. The polypeptide is Small ribosomal subunit protein uS12 (Erythrobacter litoralis (strain HTCC2594)).